We begin with the raw amino-acid sequence, 551 residues long: Small ribosomal subunit protein bS1 (551 aa).

S1 motif domains are found at residues 21–83 (GALV…LSRE), 101–167 (GEMV…VSRR), 188–256 (GQEI…LGMK), 273–343 (NSRV…LGIK), 360–430 (DEKI…LGIK), and 447–516 (DAVI…VSHK).

The protein belongs to the bacterial ribosomal protein bS1 family.

In terms of biological role, binds mRNA; thus facilitating recognition of the initiation point. It is needed to translate mRNA with a short Shine-Dalgarno (SD) purine-rich sequence. This Coxiella burnetii (strain RSA 493 / Nine Mile phase I) protein is Small ribosomal subunit protein bS1 (rpsA).